We begin with the raw amino-acid sequence, 462 residues long: Glycoprotein endo-alpha-1,2-mannosidase (462 aa).

Over 1 to 8 (MAKFRRGT) the chain is Cytoplasmic. The chain crosses the membrane as a helical; Signal-anchor for type II membrane protein span at residues 9-29 (CIILALFILFIFSLMMGLKML). Topologically, residues 30–462 (RPNTATFGAP…YALDHQLPVS (433 aa)) are lumenal. The interval 60 to 462 (DFQKSDRINS…YALDHQLPVS (403 aa)) is catalytic.

Belongs to the glycosyl hydrolase 99 family. In terms of processing, undergoes proteolytic cleavage in the C-terminal region.

The protein resides in the golgi apparatus membrane. It carries out the reaction N-{alpha-Glc-(1-&gt;3)-alpha-Man-(1-&gt;2)-alpha-Man-(1-&gt;2)-alpha-Man-(1-&gt;3)-[alpha-Man-(1-&gt;2)-alpha-Man-(1-&gt;3)-[alpha-Man-(1-&gt;2)-alpha-Man-(1-&gt;6)]-alpha-Man-(1-&gt;6)]-beta-Man-(1-&gt;4)-beta-GlcNAc-(1-&gt;4)-beta-GlcNAc}-L-asparaginyl-[protein] + H2O = alpha-D-glucosyl-(1-&gt;3)-D-mannopyranose + N(4)-{alpha-D-Man-(1-&gt;2)-alpha-D-Man-(1-&gt;3)-[alpha-D-Man-(1-&gt;2)-alpha-D-Man-(1-&gt;3)-[alpha-D-Man-(1-&gt;2)-alpha-D-Man-(1-&gt;6)]-alpha-D-Man-(1-&gt;6)]-beta-D-Man-(1-&gt;4)-beta-D-GlaNAc-(1-&gt;4)-beta-D-GlcNAc}-L-asparaginyl-[protein] (N-glucan mannose isomer 8A1,2,3B1,2). The sequence is that of Glycoprotein endo-alpha-1,2-mannosidase (MANEA) from Pongo abelii (Sumatran orangutan).